Reading from the N-terminus, the 459-residue chain is GTPase Der (459 aa).

EngA-type G domains lie at 4–169 and 179–355; these read PLVA…PEVA and IAVA…AAHR. GTP-binding positions include 10-17, 57-61, 120-123, 185-192, 232-236, and 297-300; these read GRPNVGKS, DTGGL, NKCE, DTAGI, and NKWD. The region spanning 356–441 is the KH-like domain; sequence KRIATSVVNE…PIRFRWRSKS (86 aa).

Belongs to the TRAFAC class TrmE-Era-EngA-EngB-Septin-like GTPase superfamily. EngA (Der) GTPase family. As to quaternary structure, associates with the 50S ribosomal subunit.

In terms of biological role, GTPase that plays an essential role in the late steps of ribosome biogenesis. The chain is GTPase Der from Synechococcus sp. (strain JA-3-3Ab) (Cyanobacteria bacterium Yellowstone A-Prime).